Here is an 82-residue protein sequence, read N- to C-terminus: Cytochrome b559 subunit alpha (82 aa).

Residues 22–36 (VIHSITIPALFIAGW) form a helical membrane-spanning segment. H24 contributes to the heme binding site.

This sequence belongs to the PsbE/PsbF family. Heterodimer of an alpha subunit and a beta subunit. PSII is composed of 1 copy each of membrane proteins PsbA, PsbB, PsbC, PsbD, PsbE, PsbF, PsbH, PsbI, PsbJ, PsbK, PsbL, PsbM, PsbT, PsbX, PsbY, PsbZ, Psb30/Ycf12, peripheral proteins PsbO, CyanoQ (PsbQ), PsbU, PsbV and a large number of cofactors. It forms dimeric complexes. Heme b serves as cofactor.

It is found in the cellular thylakoid membrane. This b-type cytochrome is tightly associated with the reaction center of photosystem II (PSII). PSII is a light-driven water:plastoquinone oxidoreductase that uses light energy to abstract electrons from H(2)O, generating O(2) and a proton gradient subsequently used for ATP formation. It consists of a core antenna complex that captures photons, and an electron transfer chain that converts photonic excitation into a charge separation. The sequence is that of Cytochrome b559 subunit alpha from Trichodesmium erythraeum (strain IMS101).